A 358-amino-acid polypeptide reads, in one-letter code: Uroporphyrinogen decarboxylase (358 aa).

Substrate is bound by residues 29–33 (RQAGR), Phe48, Asp79, Tyr155, Ser210, and His330.

It belongs to the uroporphyrinogen decarboxylase family. In terms of assembly, homodimer.

Its subcellular location is the cytoplasm. It carries out the reaction uroporphyrinogen III + 4 H(+) = coproporphyrinogen III + 4 CO2. Its pathway is porphyrin-containing compound metabolism; protoporphyrin-IX biosynthesis; coproporphyrinogen-III from 5-aminolevulinate: step 4/4. In terms of biological role, catalyzes the decarboxylation of four acetate groups of uroporphyrinogen-III to yield coproporphyrinogen-III. The sequence is that of Uroporphyrinogen decarboxylase from Bordetella parapertussis (strain 12822 / ATCC BAA-587 / NCTC 13253).